We begin with the raw amino-acid sequence, 492 residues long: Solute carrier family 2, facilitated glucose transporter member 1 (492 aa).

Met1 is subject to N-acetylmethionine. The Cytoplasmic segment spans residues 1–11; sequence MDPSSKKVTGR. Residues 12–33 form a helical membrane-spanning segment; the sequence is LMLAVGGAVLGSLQFGYNTGVI. Residues 34–66 are Extracellular-facing; it reads NAPQKVIEEFYNQTWNHRYGEPIPSTTLTTLWS. Residue Asn45 is glycosylated (N-linked (GlcNAc...) asparagine). Residues 67 to 87 form a helical membrane-spanning segment; it reads LSVAIFSVGGMIGSFSVGLFV. At 88–90 the chain is on the cytoplasmic side; the sequence is NRF. Residues 91–112 traverse the membrane as a helical segment; the sequence is GRRNSMLMMNLLAFVAAVLMGF. Topologically, residues 113 to 120 are extracellular; sequence SKLGKSFE. A helical membrane pass occupies residues 121 to 144; it reads MLILGRFIIGVYCGLTTGFVPMYV. Topologically, residues 145–155 are cytoplasmic; the sequence is GEVSPTALRGA. The chain crosses the membrane as a helical span at residues 156-176; sequence LGTLHQLGIVVGILIAQVFGL. Gln161 contributes to the D-glucose binding site. The Extracellular segment spans residues 177–185; sequence DSIMGNADL. A helical transmembrane segment spans residues 186 to 206; the sequence is WPLLLSVIFIPALLQCILLPF. Over 207–271 the chain is Cytoplasmic; the sequence is CPESPRFLLI…LFRSPAYRQP (65 aa). Position 226 is a phosphoserine (Ser226). A helical membrane pass occupies residues 272–293; that stretch reads ILIAVVLQLSQQLSGINAVFYY. Residues 282-283 and Asn288 contribute to the D-glucose site; that span reads QQ. Residues 294-306 lie on the Extracellular side of the membrane; the sequence is STSIFEKAGVQQP. Residues 307 to 328 form a helical membrane-spanning segment; it reads VYATIGSGIVNTAFTVVSLFVV. Asn317 is a binding site for D-glucose. Topologically, residues 329–334 are cytoplasmic; that stretch reads ERAGRR. The helical transmembrane segment at 335 to 355 threads the bilayer; sequence TLHLIGLAGMAGCAVLMTIAL. The Extracellular segment spans residues 356 to 365; it reads ALLERLPWMS. Residues 366–388 traverse the membrane as a helical segment; it reads YLSIVAIFGFVAFFEVGPGPIPW. D-glucose contacts are provided by Glu380 and Trp388. The Cytoplasmic portion of the chain corresponds to 389–401; it reads FIVAELFSQGPRP. The helical transmembrane segment at 402–422 threads the bilayer; the sequence is AAIAVAGFSNWTSNFIVGMCF. The Extracellular segment spans residues 423–429; it reads QYVEQLC. Residues 430–450 form a helical membrane-spanning segment; the sequence is GPYVFIIFTVLLVLFFIFTYF. Topologically, residues 451 to 492 are cytoplasmic; sequence KVPETKGRTFDEIASGFRQGGASQSDKTPEELFHPLGADSQV. Residue Ser465 is modified to Phosphoserine. Residues 468-492 are disordered; the sequence is RQGGASQSDKTPEELFHPLGADSQV. A Phosphothreonine modification is found at Thr478. Ser490 is modified (phosphoserine).

This sequence belongs to the major facilitator superfamily. Sugar transporter (TC 2.A.1.1) family. Glucose transporter subfamily. As to quaternary structure, found in a complex with ADD2, DMTN and SLC2A1. Interacts (via C-terminus cytoplasmic region) with DMTN isoform 2. Interacts with SNX27; the interaction is required when endocytosed to prevent degradation in lysosomes and promote recycling to the plasma membrane. Interacts with GIPC (via PDZ domain). Interacts with STOM. Interacts with SGTA (via Gln-rich region). Interacts with isoform 1 of BSG. Interacts with SMIM43; the interaction may promote SLC2A1-mediated glucose transport to meet the energy needs of mesendoderm differentiation. Post-translationally, phosphorylation at Ser-226 by PKC promotes glucose uptake by increasing cell membrane localization. As to expression, retina (at protein level).

It is found in the cell membrane. It localises to the photoreceptor inner segment. The enzyme catalyses D-glucose(out) = D-glucose(in). With respect to regulation, the uptake of glucose is inhibited by cytochalasin B. Glucose uptake is increased in response to phorbol ester 12-O-tetradecanoylphorbol-13-acetate (TPA) treatment: TPA-induced glucose uptake requires phosphorylation at Ser-226. Facilitative glucose transporter, which is responsible for constitutive or basal glucose uptake. Has a very broad substrate specificity; can transport a wide range of aldoses including both pentoses and hexoses. Most important energy carrier of the brain: present at the blood-brain barrier and assures the energy-independent, facilitative transport of glucose into the brain. In association with BSG and NXNL1, promotes retinal cone survival by increasing glucose uptake into photoreceptors. Required for mesendoderm differentiation. The polypeptide is Solute carrier family 2, facilitated glucose transporter member 1 (Mus musculus (Mouse)).